The chain runs to 393 residues: NAD(P)H-quinone oxidoreductase subunit H, chloroplastic (393 aa).

This sequence belongs to the complex I 49 kDa subunit family. In terms of assembly, NDH is composed of at least 16 different subunits, 5 of which are encoded in the nucleus.

It is found in the plastid. The protein localises to the chloroplast thylakoid membrane. It catalyses the reaction a plastoquinone + NADH + (n+1) H(+)(in) = a plastoquinol + NAD(+) + n H(+)(out). The catalysed reaction is a plastoquinone + NADPH + (n+1) H(+)(in) = a plastoquinol + NADP(+) + n H(+)(out). Its function is as follows. NDH shuttles electrons from NAD(P)H:plastoquinone, via FMN and iron-sulfur (Fe-S) centers, to quinones in the photosynthetic chain and possibly in a chloroplast respiratory chain. The immediate electron acceptor for the enzyme in this species is believed to be plastoquinone. Couples the redox reaction to proton translocation, and thus conserves the redox energy in a proton gradient. This is NAD(P)H-quinone oxidoreductase subunit H, chloroplastic from Daucus carota (Wild carrot).